The chain runs to 1115 residues: Carbamoyl phosphate synthase large chain (1115 aa).

Residues 1-407 are carboxyphosphate synthetic domain; it reads MPRRTDLHHV…ALGKVMRSLE (407 aa). ATP-binding residues include arginine 134, arginine 174, glycine 180, glycine 181, glutamate 213, isoleucine 215, glutamate 220, glycine 246, valine 247, histidine 248, glutamine 290, and glutamate 304. The region spanning 138 to 333 is the ATP-grasp 1 domain; that stretch reads KDIVAKAGGE…IAKIAAKLAI (196 aa). Positions 290, 304, and 306 each coordinate Mg(2+). Mn(2+) is bound by residues glutamine 290, glutamate 304, and asparagine 306. The segment at 408 to 559 is oligomerization domain; sequence TTRAGFWTAP…ELDPAAETEV (152 aa). The tract at residues 560–965 is carbamoyl phosphate synthetic domain; the sequence is APQTERPKVL…AFAKSQTAAY (406 aa). The ATP-grasp 2 domain maps to 693–884; sequence GDLLSAAGLP…LAKACARIML (192 aa). 10 residues coordinate ATP: arginine 729, arginine 768, leucine 770, glutamate 775, glycine 800, isoleucine 801, histidine 802, serine 803, glutamine 843, and glutamate 855. Mg(2+) is bound by residues glutamine 843, glutamate 855, and asparagine 857. Mn(2+)-binding residues include glutamine 843, glutamate 855, and asparagine 857. Residues 966-1113 enclose the MGS-like domain; the sequence is GSLPAQGTVF…QELHRVIGGV (148 aa). The allosteric domain stretch occupies residues 966 to 1115; the sequence is GSLPAQGTVF…LHRVIGGVER (150 aa).

The protein belongs to the CarB family. In terms of assembly, composed of two chains; the small (or glutamine) chain promotes the hydrolysis of glutamine to ammonia, which is used by the large (or ammonia) chain to synthesize carbamoyl phosphate. Tetramer of heterodimers (alpha,beta)4. Mg(2+) serves as cofactor. The cofactor is Mn(2+).

It carries out the reaction hydrogencarbonate + L-glutamine + 2 ATP + H2O = carbamoyl phosphate + L-glutamate + 2 ADP + phosphate + 2 H(+). The catalysed reaction is hydrogencarbonate + NH4(+) + 2 ATP = carbamoyl phosphate + 2 ADP + phosphate + 2 H(+). It participates in amino-acid biosynthesis; L-arginine biosynthesis; carbamoyl phosphate from bicarbonate: step 1/1. The protein operates within pyrimidine metabolism; UMP biosynthesis via de novo pathway; (S)-dihydroorotate from bicarbonate: step 1/3. Functionally, large subunit of the glutamine-dependent carbamoyl phosphate synthetase (CPSase). CPSase catalyzes the formation of carbamoyl phosphate from the ammonia moiety of glutamine, carbonate, and phosphate donated by ATP, constituting the first step of 2 biosynthetic pathways, one leading to arginine and/or urea and the other to pyrimidine nucleotides. The large subunit (synthetase) binds the substrates ammonia (free or transferred from glutamine from the small subunit), hydrogencarbonate and ATP and carries out an ATP-coupled ligase reaction, activating hydrogencarbonate by forming carboxy phosphate which reacts with ammonia to form carbamoyl phosphate. This is Carbamoyl phosphate synthase large chain from Mycobacterium tuberculosis (strain CDC 1551 / Oshkosh).